We begin with the raw amino-acid sequence, 331 residues long: Anthranilate phosphoribosyltransferase (331 aa).

Residues Gly79, 82–83, Thr87, 89–92, 107–115, and Ser119 each bind 5-phospho-alpha-D-ribose 1-diphosphate; these read GD, NVST, and KHGNYGVSS. Anthranilate is bound at residue Gly79. Ser91 contacts Mg(2+). Asn110 is a binding site for anthranilate. Residue Arg165 coordinates anthranilate. The Mg(2+) site is built by Asp223 and Glu224.

This sequence belongs to the anthranilate phosphoribosyltransferase family. Homodimer. It depends on Mg(2+) as a cofactor.

The catalysed reaction is N-(5-phospho-beta-D-ribosyl)anthranilate + diphosphate = 5-phospho-alpha-D-ribose 1-diphosphate + anthranilate. It functions in the pathway amino-acid biosynthesis; L-tryptophan biosynthesis; L-tryptophan from chorismate: step 2/5. Functionally, catalyzes the transfer of the phosphoribosyl group of 5-phosphorylribose-1-pyrophosphate (PRPP) to anthranilate to yield N-(5'-phosphoribosyl)-anthranilate (PRA). In Christiangramia forsetii (strain DSM 17595 / CGMCC 1.15422 / KT0803) (Gramella forsetii), this protein is Anthranilate phosphoribosyltransferase.